The sequence spans 124 residues: Large ribosomal subunit protein eL22y (124 aa).

It belongs to the eukaryotic ribosomal protein eL22 family.

The protein is Large ribosomal subunit protein eL22y (RPL22C) of Arabidopsis thaliana (Mouse-ear cress).